The following is a 392-amino-acid chain: Tryptophan synthase beta chain 1 (392 aa).

Residue K85 is modified to N6-(pyridoxal phosphate)lysine.

The protein belongs to the TrpB family. In terms of assembly, tetramer of two alpha and two beta chains. Requires pyridoxal 5'-phosphate as cofactor.

It catalyses the reaction (1S,2R)-1-C-(indol-3-yl)glycerol 3-phosphate + L-serine = D-glyceraldehyde 3-phosphate + L-tryptophan + H2O. Its pathway is amino-acid biosynthesis; L-tryptophan biosynthesis; L-tryptophan from chorismate: step 5/5. The beta subunit is responsible for the synthesis of L-tryptophan from indole and L-serine. This is Tryptophan synthase beta chain 1 (trpB1) from Methanothermobacter thermautotrophicus (strain ATCC 29096 / DSM 1053 / JCM 10044 / NBRC 100330 / Delta H) (Methanobacterium thermoautotrophicum).